A 257-amino-acid chain; its full sequence is MEIERLNALSDNYIFLLYDPAQKIAAVVDPAEPEPVFRRLEALQVDLVAIFNTHHHGDHVGANQALINRYPHLCVYGGKEDRGRIPGQQLFLEEGDRVEFAGRWAEVFFVPGHTRAHIAYYFPPVNPGDYGELFCGDTLFSGGCGRLFEGTPGQMVASLTKLRSLPDQTRVWCAHEYTLNNLKFALTVDPNNAALQQRYREVEKHRAEDLPTIPAILGTEKLTNPFLRWDSPALAMTMDSSEPVQVFARLRGKKDNF.

7 residues coordinate Zn(2+): His54, His56, Asp58, His59, His113, Asp137, and His175.

It belongs to the metallo-beta-lactamase superfamily. Glyoxalase II family. Monomer. Zn(2+) serves as cofactor.

The catalysed reaction is an S-(2-hydroxyacyl)glutathione + H2O = a 2-hydroxy carboxylate + glutathione + H(+). It participates in secondary metabolite metabolism; methylglyoxal degradation; (R)-lactate from methylglyoxal: step 2/2. In terms of biological role, thiolesterase that catalyzes the hydrolysis of S-D-lactoyl-glutathione to form glutathione and D-lactic acid. The protein is Hydroxyacylglutathione hydrolase of Microcystis aeruginosa (strain NIES-843 / IAM M-2473).